Here is a 168-residue protein sequence, read N- to C-terminus: UPF0178 protein RBAM_023530 (168 aa).

Belongs to the UPF0178 family.

The chain is UPF0178 protein RBAM_023530 from Bacillus velezensis (strain DSM 23117 / BGSC 10A6 / LMG 26770 / FZB42) (Bacillus amyloliquefaciens subsp. plantarum).